A 97-amino-acid chain; its full sequence is Large ribosomal subunit protein uL23 (97 aa).

This sequence belongs to the universal ribosomal protein uL23 family. Part of the 50S ribosomal subunit. Contacts protein L29, and trigger factor when it is bound to the ribosome.

One of the early assembly proteins it binds 23S rRNA. One of the proteins that surrounds the polypeptide exit tunnel on the outside of the ribosome. Forms the main docking site for trigger factor binding to the ribosome. The protein is Large ribosomal subunit protein uL23 of Sinorhizobium fredii (strain NBRC 101917 / NGR234).